Here is a 463-residue protein sequence, read N- to C-terminus: MKKISIKQLYREPEKFINKDIVVAGWIRTERTSKNFGFIELNDGSFFKNLQIIIDTNLDNFDKVSKLPISSSIVVEGKLVATPSAKQPFEVQASKVTVEGTSLQDYPLQKKRHSFEFLRSIAHLRPRSNTFSAVFRIRSLAAYAVHKFFQEKNFVYVHTPIITASDCEGAGEMFRVTTLDLNNIPKNDEGKIDFSQDFFDKDAKLTVSGQLSAESYALAFGNVYTFGPTFRAENSNTARHASEFWMIEPEMAFADLTDYMDVAEEMVKYIINYVLENAPEEMNFFNSFIDKDLFKRLDNVVNSEFKRITYTEAVDLLQKSGEKFQYPVEWGIDLQTEHERYITEKIFGKPVFVTDYPKDIKAFYMRLNEDNKTVAAADLLVPGVGEIIGGSQREERLDVLEERMKEFDLNEKDYWWYLELRKYGSAKHSGFGLGFERILMYMTGISNIRDVIPFPRTPGSAEF.

It belongs to the class-II aminoacyl-tRNA synthetase family. Homodimer.

Its subcellular location is the cytoplasm. The enzyme catalyses tRNA(Asn) + L-asparagine + ATP = L-asparaginyl-tRNA(Asn) + AMP + diphosphate + H(+). This Clostridium tetani (strain Massachusetts / E88) protein is Asparagine--tRNA ligase.